Here is a 66-residue protein sequence, read N- to C-terminus: Large ribosomal subunit protein bL35 (66 aa).

Residues 1 to 42 (MPKQKTHRASAKRFKRTANGGLKRHHAYTGHRFHGKTKKQRR) are disordered.

This sequence belongs to the bacterial ribosomal protein bL35 family.

This Lactobacillus gasseri (strain ATCC 33323 / DSM 20243 / BCRC 14619 / CIP 102991 / JCM 1131 / KCTC 3163 / NCIMB 11718 / NCTC 13722 / AM63) protein is Large ribosomal subunit protein bL35.